We begin with the raw amino-acid sequence, 645 residues long: Sentrin-specific protease 1 (645 aa).

An interaction with CCAR2 region spans residues 1 to 200 (MDDIADRMRM…REIYRQLLQM (200 aa)). 3 positions are modified to phosphoserine: Ser57, Ser117, and Ser157. A disordered region spans residues 92 to 117 (QSANGQWRNSTPSSSSSLQKSRNSRS). Residues 99 to 117 (RNSTPSSSSSLQKSRNSRS) show a composition bias toward low complexity. The Nuclear localization signal signature appears at 171–177 (PKKTQRR). The interval 285–313 (KDSGTLHHPHHHHSVPHQPDNLAASNTQS) is disordered. Protease regions lie at residues 451–614 (LTIT…YADC) and 451–615 (LTIT…ADCI). Residues His534 and Asp551 contribute to the active site. The short motif at 575–578 (KKRK) is the Nuclear localization signal element. The Nucleophile role is filled by Cys604. Residues 629–635 (PYFRKRM) carry the Nuclear localization signal motif. The Nuclear export signal motif lies at 636-645 (VWEILHRKLL).

Belongs to the peptidase C48 family. Interacts with RBM33; promoting ALKBH5 desumoylation and subsequent activation.

The protein localises to the nucleus. The protein resides in the cytoplasm. Its function is as follows. Protease that catalyzes two essential functions in the SUMO pathway. The first is the hydrolysis of an alpha-linked peptide bond at the C-terminal end of the small ubiquitin-like modifier (SUMO) propeptides, SUMO1, SUMO2 and SUMO3 leading to the mature form of the proteins. The second is the deconjugation of SUMO1, SUMO2 and SUMO3 from targeted proteins, by cleaving an epsilon-linked peptide bond between the C-terminal glycine of the mature SUMO and the lysine epsilon-amino group of the target protein. Deconjugates SUMO1 from HIPK2. Deconjugates SUMO1 from HDAC1 and BHLHE40/DEC1, which decreases its transcriptional repression activity. Deconjugates SUMO1 from CLOCK, which decreases its transcriptional activation activity. Deconjugates SUMO2 from MTA1. Inhibits N(6)-methyladenosine (m6A) RNA methylation by mediating SUMO1 deconjugation from METTL3 and ALKBH5: METTL3 inhibits the m6A RNA methyltransferase activity, while ALKBH5 desumoylation promotes m6A demethylation. Desumoylates CCAR2 which decreases its interaction with SIRT1. Deconjugates SUMO1 from GPS2. The polypeptide is Sentrin-specific protease 1 (SENP1) (Pongo abelii (Sumatran orangutan)).